The following is a 122-amino-acid chain: Large ribosomal subunit protein uL14c (122 aa).

Belongs to the universal ribosomal protein uL14 family. Part of the 50S ribosomal subunit.

The protein localises to the plastid. It localises to the chloroplast. Its function is as follows. Binds to 23S rRNA. The sequence is that of Large ribosomal subunit protein uL14c from Calycanthus floridus var. glaucus (Eastern sweetshrub).